The primary structure comprises 201 residues: Small ribosomal subunit protein uS4 (201 aa).

The segment at 27–47 is disordered; that stretch reads SKKNYPPGQHGNSRKRKTSEY. The S4 RNA-binding domain occupies 92-152; sequence GRLDNVVYRL…EKSKSMEVIA (61 aa).

Belongs to the universal ribosomal protein uS4 family. Part of the 30S ribosomal subunit. Contacts protein S5. The interaction surface between S4 and S5 is involved in control of translational fidelity.

Its function is as follows. One of the primary rRNA binding proteins, it binds directly to 16S rRNA where it nucleates assembly of the body of the 30S subunit. With S5 and S12 plays an important role in translational accuracy. The chain is Small ribosomal subunit protein uS4 from Parabacteroides distasonis (strain ATCC 8503 / DSM 20701 / CIP 104284 / JCM 5825 / NCTC 11152).